The sequence spans 346 residues: MQIRLNLEQKKYGYNVYINELERIEIKGKTAIVTNPKIAGLHLNTLLNSLKCDEYFIISVPDGEEYKNLATIELILEQLFTSKLDRSSTLIAFGGGVISDMTGFAASIYERGINFINIPTTLLAQVDASVGGKTGVNNKFGKNMIGSFYQPKAVYCESKFLRTLAFREFNAGLAEAVKMAVTFDKEMFEWLENVTLDEEQNLAKLVERSVLIKARVVEADEKERGLRALLNYGHTFAHVIENETGYKKYLHGEAVAIGMNMANSLSVKLGLMSEKDALRIKELLAKFSLPTHYVLRDESAFYEAFMLDKKTQEGSVKFILSNGIGSAVMKNDIKRDDVIKILREFK.

Residues 62-67 (DGEEYK), 96-100 (GVISD), 120-121 (TT), Lys-133, Lys-142, and 160-163 (FLRT) contribute to the NAD(+) site. Zn(2+) is bound by residues Glu-175, His-234, and His-251.

The protein belongs to the sugar phosphate cyclases superfamily. Dehydroquinate synthase family. It depends on Co(2+) as a cofactor. Requires Zn(2+) as cofactor. NAD(+) serves as cofactor.

The protein localises to the cytoplasm. It catalyses the reaction 7-phospho-2-dehydro-3-deoxy-D-arabino-heptonate = 3-dehydroquinate + phosphate. It participates in metabolic intermediate biosynthesis; chorismate biosynthesis; chorismate from D-erythrose 4-phosphate and phosphoenolpyruvate: step 2/7. In terms of biological role, catalyzes the conversion of 3-deoxy-D-arabino-heptulosonate 7-phosphate (DAHP) to dehydroquinate (DHQ). The polypeptide is 3-dehydroquinate synthase (Campylobacter curvus (strain 525.92)).